A 290-amino-acid chain; its full sequence is ATP synthase gamma chain (290 aa).

It belongs to the ATPase gamma chain family. As to quaternary structure, F-type ATPases have 2 components, CF(1) - the catalytic core - and CF(0) - the membrane proton channel. CF(1) has five subunits: alpha(3), beta(3), gamma(1), delta(1), epsilon(1). CF(0) has three main subunits: a, b and c.

The protein localises to the cell inner membrane. Functionally, produces ATP from ADP in the presence of a proton gradient across the membrane. The gamma chain is believed to be important in regulating ATPase activity and the flow of protons through the CF(0) complex. This chain is ATP synthase gamma chain, found in Bacteroides fragilis (strain YCH46).